Reading from the N-terminus, the 709-residue chain is Phosphoribosylformylglycinamidine synthase subunit PurL (709 aa).

Residue H36 is part of the active site. Residues Y39 and K80 each coordinate ATP. E82 serves as a coordination point for Mg(2+). Substrate is bound by residues 83–86 and R105; that span reads SHNH. H84 functions as the Proton acceptor in the catalytic mechanism. Position 106 (D106) interacts with Mg(2+). Q226 contacts substrate. D252 is a Mg(2+) binding site. A substrate-binding site is contributed by 294 to 296; sequence ETQ. The ATP site is built by D470 and G507. S510 provides a ligand contact to substrate.

Belongs to the FGAMS family. Monomer. Part of the FGAM synthase complex composed of 1 PurL, 1 PurQ and 2 PurS subunits.

Its subcellular location is the cytoplasm. It catalyses the reaction N(2)-formyl-N(1)-(5-phospho-beta-D-ribosyl)glycinamide + L-glutamine + ATP + H2O = 2-formamido-N(1)-(5-O-phospho-beta-D-ribosyl)acetamidine + L-glutamate + ADP + phosphate + H(+). Its pathway is purine metabolism; IMP biosynthesis via de novo pathway; 5-amino-1-(5-phospho-D-ribosyl)imidazole from N(2)-formyl-N(1)-(5-phospho-D-ribosyl)glycinamide: step 1/2. Part of the phosphoribosylformylglycinamidine synthase complex involved in the purines biosynthetic pathway. Catalyzes the ATP-dependent conversion of formylglycinamide ribonucleotide (FGAR) and glutamine to yield formylglycinamidine ribonucleotide (FGAM) and glutamate. The FGAM synthase complex is composed of three subunits. PurQ produces an ammonia molecule by converting glutamine to glutamate. PurL transfers the ammonia molecule to FGAR to form FGAM in an ATP-dependent manner. PurS interacts with PurQ and PurL and is thought to assist in the transfer of the ammonia molecule from PurQ to PurL. This Saccharolobus islandicus (strain M.14.25 / Kamchatka #1) (Sulfolobus islandicus) protein is Phosphoribosylformylglycinamidine synthase subunit PurL.